Here is a 151-residue protein sequence, read N- to C-terminus: Cytochrome c-type biogenesis protein CcmE 1 (151 aa).

Topologically, residues 1–8 (MNPLRKKR) are cytoplasmic. The helical; Signal-anchor for type II membrane protein transmembrane segment at 9–29 (LIIILAILVGVGAAVGLALSA) threads the bilayer. Residues 30-151 (LQQNINLFYT…QSAPTPAKEG (122 aa)) lie on the Periplasmic side of the membrane. Residues His-124 and Tyr-128 each coordinate heme. A disordered region spans residues 131-151 (PEVTKALKDSGQSAPTPAKEG).

This sequence belongs to the CcmE/CycJ family.

It localises to the cell inner membrane. Functionally, heme chaperone required for the biogenesis of c-type cytochromes. Transiently binds heme delivered by CcmC and transfers the heme to apo-cytochromes in a process facilitated by CcmF and CcmH. This Pseudomonas fluorescens (strain Pf0-1) protein is Cytochrome c-type biogenesis protein CcmE 1.